A 433-amino-acid polypeptide reads, in one-letter code: Phosphomethylpyrimidine synthase (433 aa).

Substrate-binding positions include asparagine 69, methionine 98, tyrosine 127, histidine 163, 185–187 (SRG), 226–229 (DACR), and glutamate 265. Residue histidine 269 participates in Zn(2+) binding. Tyrosine 292 contacts substrate. A Zn(2+)-binding site is contributed by histidine 333. Residues cysteine 409, cysteine 412, and cysteine 416 each contribute to the [4Fe-4S] cluster site.

Belongs to the ThiC family. [4Fe-4S] cluster serves as cofactor.

It catalyses the reaction 5-amino-1-(5-phospho-beta-D-ribosyl)imidazole + S-adenosyl-L-methionine = 4-amino-2-methyl-5-(phosphooxymethyl)pyrimidine + CO + 5'-deoxyadenosine + formate + L-methionine + 3 H(+). The protein operates within cofactor biosynthesis; thiamine diphosphate biosynthesis. Catalyzes the synthesis of the hydroxymethylpyrimidine phosphate (HMP-P) moiety of thiamine from aminoimidazole ribotide (AIR) in a radical S-adenosyl-L-methionine (SAM)-dependent reaction. The polypeptide is Phosphomethylpyrimidine synthase (Clostridioides difficile (strain 630) (Peptoclostridium difficile)).